The sequence spans 200 residues: Phospholipase A2 inhibitor LNF2 (200 aa).

An N-terminal signal peptide occupies residues 1 to 19 (MKSLHTICLLFIFVARGNS). 8 cysteine pairs are disulfide-bonded: cysteine 22–cysteine 46, cysteine 25–cysteine 32, cysteine 39–cysteine 67, cysteine 73–cysteine 94, cysteine 95–cysteine 100, cysteine 118–cysteine 143, cysteine 136–cysteine 165, and cysteine 169–cysteine 191. An N-linked (GlcNAc...) asparagine glycan is attached at asparagine 176.

The protein belongs to the CNF-like-inhibitor family. As to quaternary structure, occurs as a mixture of oligomers. Tetrameric arrangement appears to be the predominant quaternary structure. As to expression, expressed by the liver.

The protein resides in the secreted. Inhibits the enzymatic activity of phospholipase A2 (PA2). The chain is Phospholipase A2 inhibitor LNF2 from Lachesis muta muta (Bushmaster).